The following is a 446-amino-acid chain: MNILSRIFARTPSLRTRVVVATAIGAAIPVLIVGTVVWVGITNDRKERLDRKLDEAAGFAIPFVPRGLDEIPRSPNDQDAIITVRRGNLVKSNFDITLPKLTNDYADTYLRGVRYRVRTVEIPAPEPTSIAVGATYDATVAETNNLHRRVLLICGFAIAAAAVFAWLLAAFAVRPFKQLAQQTRSVDAGGEAPRVEVHGATEAVEIAEAMRGMLQRIWNEQNRTKEALASARDFAAVSSHELRTPLTAMRTNLEVLATLDLADDQRKEVLGDVIRTQSRIEATLSALERLAQGELSTSDDHVPVDITELLDRAAHDATRSYPELKVSLVPSPTCIIVGLPAGLRLAVDNAVANAVKHGGATRVQLSAVSSRAGVEIAVDDNGSGVPEDERQVVFERFSRGSTASHSGSGLGLALVAQQAQLHGGTASLETSPLGGARLLLRISAPS.

2 consecutive transmembrane segments (helical) span residues 19–39 (VVATAIGAAIPVLIVGTVVWV) and 151–171 (LLICGFAIAAAAVFAWLLAAF). In terms of domain architecture, HAMP spans 172–222 (AVRPFKQLAQQTRSVDAGGEAPRVEVHGATEAVEIAEAMRGMLQRIWNEQN). Positions 237-446 (VSSHELRTPL…RLLLRISAPS (210 aa)) constitute a Histidine kinase domain. Histidine 240 carries the post-translational modification Phosphohistidine; by autocatalysis.

In terms of processing, autophosphorylated.

The protein localises to the cell membrane. It carries out the reaction ATP + protein L-histidine = ADP + protein N-phospho-L-histidine.. In terms of biological role, member of the two-component regulatory system PrrB/PrrA that is involved specifically in early intracellular multiplication of Mycobacterium and is essential for its viability. Functions as a sensor protein kinase which is autophosphorylated at a histidine residue and transfers its phosphate group to the conserved aspartic acid residue in the regulatory domain of PrrA. In turn, PrrA binds to the upstream promoter regions of target genes including itself to positively regulate their expression. The chain is Sensor-type histidine kinase PrrB (prrB) from Mycobacterium leprae (strain TN).